Consider the following 371-residue polypeptide: MSL complex subunit 3B (371 aa).

Disordered regions lie at residues 1–47 (MATL…DERA) and 160–230 (EERA…PQAK). The segment covering 8 to 47 (PKDDGEGKDEGGSDRGDGDSKPKGKKEVEPHTRREADERA) has biased composition (basic and acidic residues). The 324-residue stretch at 44 to 367 (DERAMRIPIP…CEAHYSSKNP (324 aa)) folds into the MRG domain. A compositionally biased stretch (low complexity) spans 183–193 (SESQAVAGPAA). Positions 206 to 216 (APRRSTRHSTH) are enriched in basic residues.

It is found in the nucleus. Probable non-catalytic component of the MSL histone acetyltransferase complex, a multiprotein complex that mediates the majority of histone H4 acetylation at 'Lys-16' (H4K16ac), an epigenetic mark that prevents chromatin compaction. The protein is MSL complex subunit 3B of Mus musculus (Mouse).